A 1087-amino-acid chain; its full sequence is APDPGPGPMGMMGARGPPGPPGKSGEDGNNGRPGKPGDRGAPGPQGARGFPGTPGLPGMKGHRGYTGLDGRKGEPGGAGAKGEPGAHGAAGSPGLAGSRGRAGPAGPAGARAGPLGAAGPPGFPGGPGPKGELGPAGATGPSGAQGSRGEPGPNGAVGPVGPPGNPGNNGLNGAKGAAGTPGVAGAPGFPGPRGGPGPQGPQGAAGQRGLAGDPGTQGVKGDGGPKGEPGNSGPQGSPGPQGEEGKRGPTGELGATGPAGNRGARGMPGSEGRGASGAAGPRGPPGDAGRAGESGPAGLRGLPGSPGSSGPPGKEGPAGPSGQDGRGGPPGPTGPRGQPGNLGFPGPKGPGGEAGKPGDKGATGPTGLRGPPGPDGNNGATGATGPAGGPGEKGEQGAAGAPGFQGLPGPAGGAGEAGKPGDRGLPGDQGVSGPAGAKGERGNPGAAGASGPQGPLGPRGPAGAPGTDGGKGEPGAAGAAGGPGHQGPGGMPGERGAAGAPGGKGEKGEAGHRGPDGNAGRDGSRGMPGPAGPPGPTGANGDKGSFGPAGPAGARGEVGPAGAPGFAGPPGADGQTGARPAGPAGQSGPPGASGPAGPTGARGDXGPPGLTGFPGAAGRVGAAGPAGLVGPPGSAGPAGKDGPRGLRGDPGPSGPSGDQGMVGPPGPSGEKGPSGEPGPAGSPGTPGTSGPLGLQGFVGLPGARGDRGSPGGAGAVGEPGRVGPAGPAGARGAPGNLGLPGMTGPQGEAGREGNPGNDGPPGRPGAPGFKGDRGEPGSSGAMGLAGAPGPAGPSGGAGRGNRGESGPGGAAGAVGPAGARGAAGPSGPRGEKGVAGEKGERGLRGHAGLQGMPGPSGPSGDTGSAGPNGPAGPRGPAGPHGPPGKDGRAGGHGTLGAPGARGPPGYVGPAGPPGSPGLPGPPGPAGGGYDVSGYDEYRAAKDYEVDATLKSLNTQLENLLTPEGSRKLSHPEWSSGFYWLDPNQGCSNDALKVFCDFTTRETCLHAHPGSLARNSNAYMSDETGDLKRAVVVQGSNDVELRFTFSVLEDGCTRTNKPSRLPLLDLAPLDLGGADQEFGLDLGPVCFK.

Residues 1–931 form a disordered region; the sequence is APDPGPGPMG…PGPAGGGYDV (931 aa). 3 stretches are compositionally biased toward low complexity: residues 83–120, 150–159, and 166–187; these read EPGAHGAAGSPGLAGSRGRAGPAGPAGARAGPLGAAGP, EPGPNGAVGP, and PGNNGLNGAKGAAGTPGVAGAP. Over residues 189–199 the composition is skewed to pro residues; the sequence is FPGPRGGPGPQ. Residues 201-211 show a composition bias toward low complexity; the sequence is PQGAAGQRGLA. Positions 218–227 are enriched in gly residues; the sequence is GVKGDGGPKG. 5 stretches are compositionally biased toward low complexity: residues 228–241, 278–321, 335–345, 360–384, and 396–408; these read EPGNSGPQGSPGPQ, AAGP…AGPS, PRGQPGNLGFP, KGATGPTGLRGPPGPDGNNGATGAT, and QGAAGAPGFQGLP. Residues 409 to 418 show a composition bias toward gly residues; sequence GPAGGAGEAG. The span at 443-453 shows a compositional bias: low complexity; that stretch reads NPGAAGASGPQ. Residues 466–493 show a composition bias toward gly residues; that stretch reads GTDGGKGEPGAAGAAGGPGHQGPGGMPG. Positions 504 to 515 are enriched in basic and acidic residues; that stretch reads KGEKGEAGHRGP. 3 stretches are compositionally biased toward low complexity: residues 560–602, 613–640, and 677–695; these read PAGA…TGAR, FPGAAGRVGAAGPAGLVGPPGSAGPAGK, and PGPAGSPGTPGTSGPLGLQ. A compositionally biased stretch (gly residues) spans 708–717; it reads GSPGGAGAVG. 2 stretches are compositionally biased toward low complexity: residues 718-740 and 776-788; these read EPGRVGPAGPAGARGAPGNLGLP and PGSSGAMGLAGAP. Positions 792-812 are enriched in gly residues; that stretch reads GPSGGAGRGNRGESGPGGAAG. The segment covering 813 to 828 has biased composition (low complexity); that stretch reads AVGPAGARGAAGPSGP. The segment covering 829-843 has biased composition (basic and acidic residues); it reads RGEKGVAGEKGERGL. 2 stretches are compositionally biased toward low complexity: residues 849–868 and 897–909; these read LQGMPGPSGPSGDTGSAGPN and APGARGPPGYVGP. Over residues 910–924 the composition is skewed to pro residues; the sequence is AGPPGSPGLPGPPGP. The region spanning 929-1087 is the Fibrillar collagen NC1 domain; sequence YDVSGYDEYR…GLDLGPVCFK (159 aa).

Belongs to the fibrillar collagen family.

The protein resides in the secreted. It is found in the extracellular space. The protein localises to the extracellular matrix. The chain is Collagen alpha-2(I) chain from Epinephelus costae (Goldblotch grouper).